Consider the following 61-residue polypeptide: UPF0434 protein Bfl377 (61 aa).

It belongs to the UPF0434 family.

The protein is UPF0434 protein Bfl377 of Blochmanniella floridana.